Here is a 249-residue protein sequence, read N- to C-terminus: 5'-nucleotidase SurE (249 aa).

Asp9, Asp10, Ser40, and Asn92 together coordinate a divalent metal cation.

It belongs to the SurE nucleotidase family. The cofactor is a divalent metal cation.

The protein localises to the cytoplasm. It catalyses the reaction a ribonucleoside 5'-phosphate + H2O = a ribonucleoside + phosphate. Functionally, nucleotidase that shows phosphatase activity on nucleoside 5'-monophosphates. In Shewanella sp. (strain MR-4), this protein is 5'-nucleotidase SurE.